Consider the following 260-residue polypeptide: Shikimate dehydrogenase (NADP(+)) (260 aa).

Residues 14–16 (SAS) and T60 each bind shikimate. K64 serves as the catalytic Proton acceptor. Residues N85 and D100 each contribute to the shikimate site. NADP(+) is bound by residues 121-125 (GAGGA), 145-150 (NRTYER), and F201. Y203 contributes to the shikimate binding site. G225 is a binding site for NADP(+).

Belongs to the shikimate dehydrogenase family. Homodimer.

It carries out the reaction shikimate + NADP(+) = 3-dehydroshikimate + NADPH + H(+). It functions in the pathway metabolic intermediate biosynthesis; chorismate biosynthesis; chorismate from D-erythrose 4-phosphate and phosphoenolpyruvate: step 4/7. In terms of biological role, involved in the biosynthesis of the chorismate, which leads to the biosynthesis of aromatic amino acids. Catalyzes the reversible NADPH linked reduction of 3-dehydroshikimate (DHSA) to yield shikimate (SA). This is Shikimate dehydrogenase (NADP(+)) from Pyrobaculum neutrophilum (strain DSM 2338 / JCM 9278 / NBRC 100436 / V24Sta) (Thermoproteus neutrophilus).